The chain runs to 425 residues: Histidine--tRNA ligase (425 aa).

This sequence belongs to the class-II aminoacyl-tRNA synthetase family. Homodimer.

The protein resides in the cytoplasm. It catalyses the reaction tRNA(His) + L-histidine + ATP = L-histidyl-tRNA(His) + AMP + diphosphate + H(+). This is Histidine--tRNA ligase from Histophilus somni (strain 2336) (Haemophilus somnus).